The following is a 331-amino-acid chain: UPF0194 membrane protein CKO_02332 (331 aa).

A signal peptide spans 1–15; that stretch reads MKKPVVIALAVAALA. The stretch at 142–207 forms a coiled coil; the sequence is ISANDLENAR…ELDLQDTTLI (66 aa).

Belongs to the UPF0194 family.

It is found in the periplasm. This Citrobacter koseri (strain ATCC BAA-895 / CDC 4225-83 / SGSC4696) protein is UPF0194 membrane protein CKO_02332.